The chain runs to 179 residues: Large ribosomal subunit protein uL5 (179 aa).

It belongs to the universal ribosomal protein uL5 family. As to quaternary structure, part of the 50S ribosomal subunit; part of the 5S rRNA/L5/L18/L25 subcomplex. Contacts the 5S rRNA and the P site tRNA. Forms a bridge to the 30S subunit in the 70S ribosome.

Functionally, this is one of the proteins that bind and probably mediate the attachment of the 5S RNA into the large ribosomal subunit, where it forms part of the central protuberance. In the 70S ribosome it contacts protein S13 of the 30S subunit (bridge B1b), connecting the 2 subunits; this bridge is implicated in subunit movement. Contacts the P site tRNA; the 5S rRNA and some of its associated proteins might help stabilize positioning of ribosome-bound tRNAs. This Bacillus pumilus (strain SAFR-032) protein is Large ribosomal subunit protein uL5.